Reading from the N-terminus, the 281-residue chain is Apolipoprotein E (281 aa).

The signal sequence occupies residues 1 to 18 (MKVLWAALLIALLAGCQG). Tandem repeats lie at residues 82–103 (ALMD…EQLS), 104–125 (PVAE…ARLG), 126–147 (ADME…AMLG), 148–169 (QSTD…TVSY), and 198–219 (TRME…EQVE). Residues 82–219 (ALMDETMKEL…RLDEVKEQVE (138 aa)) form a 5 X 22 AA approximate tandem repeats region. Residue Met145 is modified to Methionine sulfoxide. Ser149 is modified (phosphoserine). Residues 160–170 (HLRKLRTVSYT) form an LDL and other lipoprotein receptors binding region. Heparin contacts are provided by residues 164 to 167 (LRTV) and 193 to 200 (GERLRTRM). The interval 230 to 281 (QQMRLQAEAFQARLKSWFEPLVEDMQRQWAGLVEKVQAAVGASAAPVPSDNH) is homooligomerization. The interval 242 to 254 (RLKSWFEPLVEDM) is specificity for association with VLDL.

This sequence belongs to the apolipoprotein A1/A4/E family. Homotetramer. May interact with ABCA1; functionally associated with ABCA1 in the biogenesis of HDLs. May interact with APP/A4 amyloid-beta peptide; the interaction is extremely stable in vitro but its physiological significance is unclear. May interact with MAPT. May interact with MAP2. In the cerebrospinal fluid, interacts with secreted SORL1. Interacts with PMEL; this allows the loading of PMEL luminal fragment on ILVs to induce fibril nucleation. Post-translationally, APOE exists as multiple glycosylated and sialylated glycoforms within cells and in plasma. The extent of glycosylation and sialylation are tissue and context specific. In terms of processing, glycated in plasma VLDL. Phosphorylated by FAM20C in the extracellular medium.

The protein localises to the secreted. It is found in the extracellular space. Its subcellular location is the extracellular matrix. It localises to the extracellular vesicle. The protein resides in the endosome. The protein localises to the multivesicular body. Functionally, APOE is an apolipoprotein, a protein associating with lipid particles, that mainly functions in lipoprotein-mediated lipid transport between organs via the plasma and interstitial fluids. APOE is a core component of plasma lipoproteins and is involved in their production, conversion and clearance. Apolipoproteins are amphipathic molecules that interact both with lipids of the lipoprotein particle core and the aqueous environment of the plasma. As such, APOE associates with chylomicrons, chylomicron remnants, very low density lipoproteins (VLDL) and intermediate density lipoproteins (IDL) but shows a preferential binding to high-density lipoproteins (HDL). It also binds a wide range of cellular receptors including the LDL receptor/LDLR, the LDL receptor-related proteins LRP1, LRP2 and LRP8 and the very low-density lipoprotein receptor/VLDLR that mediate the cellular uptake of the APOE-containing lipoprotein particles. Finally, APOE also has a heparin-binding activity and binds heparan-sulfate proteoglycans on the surface of cells, a property that supports the capture and the receptor-mediated uptake of APOE-containing lipoproteins by cells. A main function of APOE is to mediate lipoprotein clearance through the uptake of chylomicrons, VLDLs, and HDLs by hepatocytes. APOE is also involved in the biosynthesis by the liver of VLDLs as well as their uptake by peripheral tissues ensuring the delivery of triglycerides and energy storage in muscle, heart and adipose tissues. By participating in the lipoprotein-mediated distribution of lipids among tissues, APOE plays a critical role in plasma and tissues lipid homeostasis. APOE is also involved in two steps of reverse cholesterol transport, the HDLs-mediated transport of cholesterol from peripheral tissues to the liver, and thereby plays an important role in cholesterol homeostasis. First, it is functionally associated with ABCA1 in the biogenesis of HDLs in tissues. Second, it is enriched in circulating HDLs and mediates their uptake by hepatocytes. APOE also plays an important role in lipid transport in the central nervous system, regulating neuron survival and sprouting. The sequence is that of Apolipoprotein E (APOE) from Aotus nancymaae (Ma's night monkey).